The sequence spans 599 residues: Matrix metallopeptidase-21 (599 aa).

The first 20 residues, 1–20 (MLTVIRRIFIIQTFIFITAE), serve as a signal peptide directing secretion. A propeptide spanning residues 21–170 (KIFHSRDHSD…NHEHQAPVRK (150 aa)) is cleaved from the precursor. Cysteine 130 is a binding site for Zn(2+). The tract at residues 141-170 (DVTGSNSTRNHIRTSTNTSHNHEHQAPVRK) is disordered. A compositionally biased stretch (polar residues) spans 143–159 (TGSNSTRNHIRTSTNTS). Zn(2+) is bound at residue histidine 309. The active site involves glutamate 310. Zn(2+)-binding residues include histidine 313 and histidine 319. Residues cysteine 355 and cysteine 586 are joined by a disulfide bond. Hemopexin repeat units lie at residues 356–415 (TGRF…WHGL), 417–473 (SGGV…FPGV), 474–522 (SGPL…FPAI), and 529–585 (VRSL…WFDI). N-linked (GlcNAc...) asparagine glycosylation is present at asparagine 398.

Belongs to the peptidase M10A family. In terms of processing, the precursor is cleaved by a furin endopeptidase.

Plays a specialized role in the generation of left-right asymmetry during embryogenesis. May act as a negative regulator of the NOTCH-signaling pathway. The polypeptide is Matrix metallopeptidase-21 (Danio rerio (Zebrafish)).